The following is a 280-amino-acid chain: Transcription factor ovo-like homolog lin-48 (280 aa).

4 C2H2-type zinc fingers span residues 133–155, 161–183, 189–212, and 228–251; these read LTCH…IKCH, YLCT…TRTH, YKCE…RKVH, and FVCE…KVVH.

The protein resides in the nucleus. In terms of biological role, transcription factor. Involved in development of the hindgut, the male tail, and the excretory duct cell. Involved in modulating function of excretory duct cells. Plays a role in left/right patterning of cell fates in the hindgut. The sequence is that of Transcription factor ovo-like homolog lin-48 from Caenorhabditis elegans.